The following is a 361-amino-acid chain: Methyltransferase LUC1 (361 aa).

The S-adenosyl-L-homocysteine site is built by Tyr-18, Asn-66, Asp-89, Ser-126, and Phe-127. Mg(2+) contacts are provided by Gln-156 and Phe-233.

Belongs to the methyltransferase superfamily. Type-7 methyltransferase family. The cofactor is Mg(2+).

The protein operates within mycotoxin biosynthesis. Methyltransferase; part of the gene cluster that mediates the biosynthesis of the mycotoxin lucilactaene and the lucilactaene-related compound NG-391 that act as cell cycle inhibitors with potent growth inhibitory activity against malarial parasites, moderate growth inhibitory activity against cancer cells, and no activity against bacteria and fungi. LUC1 performs the last step of the pathway and methylates the hydroxyl group of demethyllucilactaene at C-21 to yeald lucilactaene. The pathway begins with the hybrid PKS-NRPS synthetase LUC5 which is responsible for the condensation of one acetyl-coenzyme A (CoA) unit with six malonyl-CoA units and the amide linkage of the arising heptaketide and homoserine, subsequently releasing the first intermediate prelucilactaene B. Both the cytochrome P450 monooxygenase LUC2 and the hydrolase LUC6 function in parallel in modification of prelucilactaene B. LUC6 may catalyze the 2-pyrrolidone ring formation to form prelucilactaene C from prelucilactaene B, followed by C-15 hydroxylation by the same enzyme to give prelucilactaene D, which is then converted to prelucilactaene E by epoxidation, and finally to prelucilactaene F by cyclization. Prelucilactane D, prelucilactaene E, and prelucilactaene F can be converted to dihydrolucilactaene, NG391, and lucilactaene, respectively, via C-20 methyl group hydroxylation by the cytochrome P450 monooxygenase LUC2. However, LUC2, unlike FUS8 in fusarin C biosynthesis, is not enough for the full oxidation of the C-20 methyl group into carboxylic acid, which is a prerequisite for the final methylation step. The aldehyde dehydrogenase LUC3 is involved in the biosynthesis by further oxidation of the C-20 alcoholic analog prelucilactaene G into a carboxylic derivative. This unidentified carboxylic derivative may be converted to demethyllucilactaene. As the last step, the methyltransferase LUC1 methylates the hydroxyl group at C-21 of demethyllucilactaene to generate lucilactaene. The protein is Methyltransferase LUC1 of Fusarium sp.